The primary structure comprises 243 residues: Vesicle-associated membrane protein-associated protein B (243 aa).

A2 carries the post-translational modification N-acetylalanine. The Cytoplasmic portion of the chain corresponds to 2–218 (AKVEQVLSLE…PAPATPGKEE (217 aa)). One can recognise an MSP domain in the interval 7 to 124 (VLSLEPQHEL…MDSKLRCVFE (118 aa)). S146 carries the post-translational modification Phosphoserine. K147 is covalently cross-linked (Glycyl lysine isopeptide (Lys-Gly) (interchain with G-Cter in SUMO1)). T150 is subject to Phosphothreonine. 2 positions are modified to phosphoserine: S158 and S159. Residues 161–196 (LDDTEVKKVMEECKRLQSEVQRLREENKQLKEEDGL) adopt a coiled-coil conformation. Basic and acidic residues predominate over residues 185–197 (EENKQLKEEDGLR). The interval 185-217 (EENKQLKEEDGLRMRKPVLSNSPAPAPATPGKE) is disordered. S206 bears the Phosphoserine mark. The chain crosses the membrane as a helical; Anchor for type IV membrane protein span at residues 219 to 239 (GLSTRLLALVVLFFIVGVIIG).

It belongs to the VAMP-associated protein (VAP) (TC 9.B.17) family. In terms of assembly, homodimer, and heterodimer with VAPA. Interacts with VAMP1 and VAMP2. Interacts (via MSP domain) with ZFYVE27. Interacts with RMDN3. Interacts with KIF5A in a ZFYVE27-dependent manner. Interacts (via MSP domain) with STARD3 (via phospho-FFAT motif). Interacts with STARD3NL (via FFAT motif). Interacts with CERT1. Interacts with PLEKHA3 and SACM1L to form a ternary complex. Interacts with VPS13A (via FFAT motif). Interacts with RB1CC1 (via phosphorylated FFAT motif), MIGA2 (via phosphorylated FFAT motif), RMDN3 (via phosphorylated FFAT motif), OSBPL1A (via FFAT motif), KCNB1 (via phosphorylated FFAT motif) and KCNB2 (via phosphorylated FFAT motif). Interacts (via MSP domain) with WDR44 (via FFAT motif); the interactions connect the endoplasmic reticulum (ER) with the endosomal tubule.

It localises to the endoplasmic reticulum membrane. Endoplasmic reticulum (ER)-anchored protein that mediates the formation of contact sites between the ER and endosomes via interaction with FFAT motif-containing proteins such as STARD3 or WDR44. Interacts with STARD3 in a FFAT motif phosphorylation dependent manner. Via interaction with WDR44 participates in neosynthesized protein export. Participates in the endoplasmic reticulum unfolded protein response (UPR) by inducing ERN1/IRE1 activity. Involved in cellular calcium homeostasis regulation. The chain is Vesicle-associated membrane protein-associated protein B from Sus scrofa (Pig).